Reading from the N-terminus, the 203-residue chain is Enterotoxin-like toxin X (203 aa).

It belongs to the staphylococcal/streptococcal toxin family.

The protein localises to the secreted. In terms of biological role, plays a role in the inhibition of the host innate immune system. Inhibits phagocytosis and killing by human neutrophils by interacting with multiple neutrophil surface glycoproteins in a sialic acid-dependent manner. The chain is Enterotoxin-like toxin X from Staphylococcus aureus (strain NCTC 8325 / PS 47).